Consider the following 413-residue polypeptide: Enolase (413 aa).

Q170 provides a ligand contact to (2R)-2-phosphoglycerate. E212 acts as the Proton donor in catalysis. Mg(2+) contacts are provided by D245, E286, and D313. (2R)-2-phosphoglycerate-binding residues include K338, R367, S368, and K389. K338 (proton acceptor) is an active-site residue.

The protein belongs to the enolase family. The cofactor is Mg(2+).

Its subcellular location is the cytoplasm. The protein resides in the secreted. The protein localises to the cell surface. The catalysed reaction is (2R)-2-phosphoglycerate = phosphoenolpyruvate + H2O. The protein operates within carbohydrate degradation; glycolysis; pyruvate from D-glyceraldehyde 3-phosphate: step 4/5. Functionally, catalyzes the reversible conversion of 2-phosphoglycerate (2-PG) into phosphoenolpyruvate (PEP). It is essential for the degradation of carbohydrates via glycolysis. The polypeptide is Enolase (Neorickettsia sennetsu (strain ATCC VR-367 / Miyayama) (Ehrlichia sennetsu)).